A 166-amino-acid polypeptide reads, in one-letter code: Signal peptidase complex catalytic subunit SEC11 (166 aa).

The Cytoplasmic portion of the chain corresponds to 1 to 9 (MNIRQQLTQ). The helical; Signal-anchor for type II membrane protein transmembrane segment at 10 to 30 (LLTLGYVFASAFMLWKTLSVV) threads the bilayer. Topologically, residues 31-166 (ANLHSPIVVV…LGLSSLFSNE (136 aa)) are lumenal. Catalysis depends on charge relay system residues Ser44, His83, and Asp108. The C-terminal short (CTS) helix stretch occupies residues 152–163 (GLLGLLGLSSLF).

The protein belongs to the peptidase S26B family. As to quaternary structure, component of the signal peptidase complex (SPC) composed of a catalytic subunit SEC11 and three accessory subunits SPC1, SPC2 and SPC3. The complex induces a local thinning of the ER membrane which is used to measure the length of the signal peptide (SP) h-region of protein substrates. This ensures the selectivity of the complex towards h-regions shorter than 18-20 amino acids. SPC associates with the translocon complex.

It is found in the endoplasmic reticulum membrane. It carries out the reaction Cleavage of hydrophobic, N-terminal signal or leader sequences from secreted and periplasmic proteins.. Catalytic component of the signal peptidase complex (SPC) which catalyzes the cleavage of N-terminal signal sequences from nascent proteins as they are translocated into the lumen of the endoplasmic reticulum. Specifically cleaves N-terminal signal peptides that contain a hydrophobic alpha-helix (h-region) shorter than 18-20 amino acids. The polypeptide is Signal peptidase complex catalytic subunit SEC11 (SEC11) (Lodderomyces elongisporus (strain ATCC 11503 / CBS 2605 / JCM 1781 / NBRC 1676 / NRRL YB-4239) (Yeast)).